We begin with the raw amino-acid sequence, 201 residues long: Orotate phosphoribosyltransferase (201 aa).

Residue 113 to 121 coordinates 5-phospho-alpha-D-ribose 1-diphosphate; the sequence is EDIITTGKS. 2 residues coordinate orotate: T117 and R145.

This sequence belongs to the purine/pyrimidine phosphoribosyltransferase family. PyrE subfamily. Homodimer. It depends on Mg(2+) as a cofactor.

The enzyme catalyses orotidine 5'-phosphate + diphosphate = orotate + 5-phospho-alpha-D-ribose 1-diphosphate. It participates in pyrimidine metabolism; UMP biosynthesis via de novo pathway; UMP from orotate: step 1/2. Its function is as follows. Catalyzes the transfer of a ribosyl phosphate group from 5-phosphoribose 1-diphosphate to orotate, leading to the formation of orotidine monophosphate (OMP). The protein is Orotate phosphoribosyltransferase of Helicobacter acinonychis (strain Sheeba).